A 449-amino-acid chain; its full sequence is Elongation factor 1-alpha (449 aa).

In terms of domain architecture, tr-type G spans 5 to 234; the sequence is KQHVSIVVIG…DNCDPPKRPV (230 aa). The interval 14-21 is G1; the sequence is GHVDSGKS. 14-21 is a binding site for GTP; the sequence is GHVDSGKS. Lysine 55 is modified (N6,N6-dimethyllysine). The tract at residues 70-74 is G2; it reads GITID. Residue lysine 79 is modified to N6,N6,N6-trimethyllysine. The segment at 91-94 is G3; it reads DAPG. Residues 91-95 and 153-156 each bind GTP; these read DAPGH and NKMD. Residues 153 to 156 are G4; sequence NKMD. Lysine 187 carries the post-translational modification N6,N6,N6-trimethyllysine. Residues 194–196 are G5; the sequence is SGW. Lysine 265 carries the N6-methyllysine modification. An N6,N6,N6-trimethyllysine mark is found at lysine 310 and lysine 400.

It belongs to the TRAFAC class translation factor GTPase superfamily. Classic translation factor GTPase family. EF-Tu/EF-1A subfamily.

Its subcellular location is the cytoplasm. Functionally, this protein promotes the GTP-dependent binding of aminoacyl-tRNA to the A-site of ribosomes during protein biosynthesis. The protein is Elongation factor 1-alpha of Pyropia yezoensis (Susabi-nori).